Reading from the N-terminus, the 173-residue chain is Small ribosomal subunit protein uS5 (173 aa).

One can recognise an S5 DRBM domain in the interval 17–80; sequence WQERVIQIRR…SDAKKHVVDV (64 aa).

Belongs to the universal ribosomal protein uS5 family. In terms of assembly, part of the 30S ribosomal subunit. Contacts proteins S4 and S8.

Its function is as follows. With S4 and S12 plays an important role in translational accuracy. Located at the back of the 30S subunit body where it stabilizes the conformation of the head with respect to the body. The protein is Small ribosomal subunit protein uS5 of Picosynechococcus sp. (strain ATCC 27264 / PCC 7002 / PR-6) (Agmenellum quadruplicatum).